The primary structure comprises 158 residues: uncharacterized protein (158 aa).

2 helical membrane-spanning segments follow: residues 10–30 (LSSL…QFIV) and 137–157 (IEVF…AYFF).

Its subcellular location is the cell membrane. This is an uncharacterized protein from Bacillus subtilis (strain 168).